The sequence spans 115 residues: Splicing factor 3B subunit 6-like protein (115 aa).

The segment at 9 to 22 (EVNSILFIKNLSFK) is interaction with pre-mRNA branch site. An RRM domain is found at 12–87 (SILFIKNLSF…RYLVVHYYNP (76 aa)).

Its subcellular location is the nucleus. Necessary for the splicing of pre-mRNA. In Schizosaccharomyces pombe (strain 972 / ATCC 24843) (Fission yeast), this protein is Splicing factor 3B subunit 6-like protein.